The primary structure comprises 536 residues: Maintenance of mitochondrial morphology protein 1 (536 aa).

At 1-25 (MAGPSNQTQPPPPVLTQPSLSFTQG) the chain is on the lumenal side. The helical transmembrane segment at 26-46 (LLVGQLSVVLLIGAFIKFFIF) threads the bilayer. Topologically, residues 47–536 (GEAPPHPSRN…GSMPDPVVVT (490 aa)) are cytoplasmic. Disordered regions lie at residues 52 to 135 (HPSR…SHQP), 275 to 331 (GPGT…ATAA), 416 to 467 (GRTG…GGSM), and 505 to 536 (YGGA…VVVT). Polar residues-rich tracts occupy residues 69 to 81 (YSLN…SSPR), 88 to 105 (STSN…NTRS), and 112 to 121 (YSATPTNPTS). Positions 122–132 (KHSRSRPHHSS) are enriched in basic residues. Residues 134 to 409 (QPESLDWFNV…EPRVQVVGLP (276 aa)) enclose the SMP-LTD domain. Positions 321 to 331 (TNTNTAGATAA) are enriched in low complexity. Gly residues-rich tracts occupy residues 442–467 (TAGG…GGSM) and 507–517 (GAQGGGGGGGR).

This sequence belongs to the MMM1 family. In terms of assembly, homodimer. Component of the ER-mitochondria encounter structure (ERMES) or MDM complex, composed of MMM1, MDM10, MDM12 and MDM34. An MMM1 homodimer associates with one molecule of MDM12 on each side in a pairwise head-to-tail manner, and the SMP-LTD domains of MMM1 and MDM12 generate a continuous hydrophobic tunnel for phospholipid trafficking.

It localises to the endoplasmic reticulum membrane. In terms of biological role, component of the ERMES/MDM complex, which serves as a molecular tether to connect the endoplasmic reticulum (ER) and mitochondria. Components of this complex are involved in the control of mitochondrial shape and protein biogenesis, and function in nonvesicular lipid trafficking between the ER and mitochondria. The MDM12-MMM1 subcomplex functions in the major beta-barrel assembly pathway that is responsible for biogenesis of all outer membrane beta-barrel proteins, and acts in a late step after the SAM complex. The MDM10-MDM12-MMM1 subcomplex further acts in the TOM40-specific pathway after the action of the MDM12-MMM1 complex. Essential for establishing and maintaining the structure of mitochondria and maintenance of mtDNA nucleoids. This Ajellomyces dermatitidis (strain ER-3 / ATCC MYA-2586) (Blastomyces dermatitidis) protein is Maintenance of mitochondrial morphology protein 1.